We begin with the raw amino-acid sequence, 247 residues long: MSQEPDRLFAQPLAEVPDFVFNEDVVRVFPDMIKRSVPGYPTIVENIGVLAGQFAQPHTTLYDLGASLGAVTQALRRHVRIDGCKVIAVDNSPAMVARCSEYLHAQDAMFQELLPVEVIEADILALDLQPTSLVTLNFTLQFIPPERRLELLTRIRQALLPGGALILSEKLRFEDAAEHELLTELHVAFKRANGYSELEIAQKRSAIEKVMLPDSLEQHRERLLAAGFSKVVPWFQCLNFASLVALP.

S-adenosyl-L-methionine contacts are provided by residues Tyr-40, Gly-65–Ser-67, Asp-90–Asn-91, Asp-122–Ile-123, Asn-137, and Arg-204.

It belongs to the class I-like SAM-binding methyltransferase superfamily. Cx-SAM synthase family. In terms of assembly, homodimer.

The enzyme catalyses prephenate + S-adenosyl-L-methionine = carboxy-S-adenosyl-L-methionine + 3-phenylpyruvate + H2O. In terms of biological role, catalyzes the conversion of S-adenosyl-L-methionine (SAM) to carboxy-S-adenosyl-L-methionine (Cx-SAM). The polypeptide is Carboxy-S-adenosyl-L-methionine synthase (Ectopseudomonas mendocina (strain ymp) (Pseudomonas mendocina)).